Here is a 224-residue protein sequence, read N- to C-terminus: UPF0758 protein Rpic_2712 (224 aa).

An MPN domain is found at 102–224 (TFESAQSVKD…VYGFLEHGKM (123 aa)). Positions 173, 175, and 186 each coordinate Zn(2+). The JAMM motif signature appears at 173–186 (HNHPTGNTEPSESD).

It belongs to the UPF0758 family.

The protein is UPF0758 protein Rpic_2712 of Ralstonia pickettii (strain 12J).